A 199-amino-acid polypeptide reads, in one-letter code: Large ribosomal subunit protein uL13A (199 aa).

Ser-2 bears the N-acetylserine mark. Residue Lys-177 forms a Glycyl lysine isopeptide (Lys-Gly) (interchain with G-Cter in ubiquitin) linkage.

Belongs to the universal ribosomal protein uL13 family. Component of the large ribosomal subunit (LSU). Mature yeast ribosomes consist of a small (40S) and a large (60S) subunit. The 40S small subunit contains 1 molecule of ribosomal RNA (18S rRNA) and 33 different proteins (encoded by 57 genes). The large 60S subunit contains 3 rRNA molecules (25S, 5.8S and 5S rRNA) and 46 different proteins (encoded by 81 genes). N-terminally acetylated by acetyltransferase NatA.

The protein localises to the cytoplasm. Component of the ribosome, a large ribonucleoprotein complex responsible for the synthesis of proteins in the cell. The small ribosomal subunit (SSU) binds messenger RNAs (mRNAs) and translates the encoded message by selecting cognate aminoacyl-transfer RNA (tRNA) molecules. The large subunit (LSU) contains the ribosomal catalytic site termed the peptidyl transferase center (PTC), which catalyzes the formation of peptide bonds, thereby polymerizing the amino acids delivered by tRNAs into a polypeptide chain. The nascent polypeptides leave the ribosome through a tunnel in the LSU and interact with protein factors that function in enzymatic processing, targeting, and the membrane insertion of nascent chains at the exit of the ribosomal tunnel. The chain is Large ribosomal subunit protein uL13A from Saccharomyces cerevisiae (strain ATCC 204508 / S288c) (Baker's yeast).